We begin with the raw amino-acid sequence, 381 residues long: L-lactate dehydrogenase (381 aa).

The FMN hydroxy acid dehydrogenase domain maps to 1-380; it reads MIISASTDYR…SADSLVRELG (380 aa). A substrate-binding site is contributed by tyrosine 24. Residues serine 106 and glutamine 127 each coordinate FMN. Tyrosine 129 provides a ligand contact to substrate. Residue threonine 155 participates in FMN binding. Arginine 164 contributes to the substrate binding site. Lysine 251 is a binding site for FMN. The Proton acceptor role is filled by histidine 275. Arginine 278 provides a ligand contact to substrate. 306 to 330 serves as a coordination point for FMN; sequence DSGIRTGLDVVRMIALGADSVLLGR.

It belongs to the FMN-dependent alpha-hydroxy acid dehydrogenase family. In terms of assembly, homotetramer. FMN serves as cofactor.

The protein resides in the cell inner membrane. The enzyme catalyses (S)-lactate + A = pyruvate + AH2. Catalyzes the conversion of L-lactate to pyruvate. Is coupled to the respiratory chain. The protein is L-lactate dehydrogenase of Pseudomonas aeruginosa (strain UCBPP-PA14).